We begin with the raw amino-acid sequence, 160 residues long: Ribonuclease P protein component 2 (160 aa).

This sequence belongs to the eukaryotic/archaeal RNase P protein component 2 family. In terms of assembly, consists of a catalytic RNA component and at least 4-5 protein subunits.

The protein resides in the cytoplasm. The enzyme catalyses Endonucleolytic cleavage of RNA, removing 5'-extranucleotides from tRNA precursor.. Functionally, part of ribonuclease P, a protein complex that generates mature tRNA molecules by cleaving their 5'-ends. This chain is Ribonuclease P protein component 2, found in Methanoculleus marisnigri (strain ATCC 35101 / DSM 1498 / JR1).